The primary structure comprises 306 residues: Ribonuclease Z (306 aa).

The Zn(2+) site is built by H63, H65, D67, H68, H141, D208, and H266. The active-site Proton acceptor is D67.

It belongs to the RNase Z family. As to quaternary structure, homodimer. Zn(2+) is required as a cofactor.

It carries out the reaction Endonucleolytic cleavage of RNA, removing extra 3' nucleotides from tRNA precursor, generating 3' termini of tRNAs. A 3'-hydroxy group is left at the tRNA terminus and a 5'-phosphoryl group is left at the trailer molecule.. Its function is as follows. Zinc phosphodiesterase, which displays some tRNA 3'-processing endonuclease activity. Probably involved in tRNA maturation, by removing a 3'-trailer from precursor tRNA. This is Ribonuclease Z from Protochlamydia amoebophila (strain UWE25).